The sequence spans 299 residues: Glycine--tRNA ligase alpha subunit (299 aa).

It belongs to the class-II aminoacyl-tRNA synthetase family. As to quaternary structure, tetramer of two alpha and two beta subunits.

The protein localises to the cytoplasm. The catalysed reaction is tRNA(Gly) + glycine + ATP = glycyl-tRNA(Gly) + AMP + diphosphate. This chain is Glycine--tRNA ligase alpha subunit, found in Dichelobacter nodosus (strain VCS1703A).